The sequence spans 156 residues: Peroxisomal membrane associated protein 20 (156 aa).

In terms of domain architecture, Thioredoxin spans 2 to 156 (VAVGSTLPKV…SSADKVLSSL (155 aa)). Cys-43 acts as the Cysteine sulfenic acid (-SOH) intermediate in catalysis.

The protein belongs to the peroxiredoxin family. Prx5 subfamily. Homodimer; disulfide-linked, upon oxidation.

Its subcellular location is the cytoplasm. It is found in the nucleus. Its function is as follows. May act as a chaperone rather than a peroxidase. Has no thioredoxin-dependent peroxidase activity. Shows weak chaperone activity. The polypeptide is Peroxisomal membrane associated protein 20 (Schizosaccharomyces pombe (strain 972 / ATCC 24843) (Fission yeast)).